A 443-amino-acid polypeptide reads, in one-letter code: Threonine/serine transporter TdcC (443 aa).

11 helical membrane passes run T22–I42, A44–F64, G97–V117, F140–M160, V163–I183, I207–I227, M261–A281, F311–F331, I366–L386, I389–I409, and D423–F443.

It belongs to the amino acid/polyamine transporter 2 family. SdaC/TdcC subfamily.

Its subcellular location is the cell inner membrane. The enzyme catalyses L-threonine(in) + H(+)(in) = L-threonine(out) + H(+)(out). It carries out the reaction L-serine(in) + H(+)(in) = L-serine(out) + H(+)(out). Functionally, involved in the import of threonine and serine into the cell, with the concomitant import of a proton (symport system). This is Threonine/serine transporter TdcC from Shigella boydii serotype 18 (strain CDC 3083-94 / BS512).